A 454-amino-acid polypeptide reads, in one-letter code: Argininosuccinate lyase (454 aa).

It belongs to the lyase 1 family. Argininosuccinate lyase subfamily.

Its subcellular location is the cytoplasm. The enzyme catalyses 2-(N(omega)-L-arginino)succinate = fumarate + L-arginine. It participates in amino-acid biosynthesis; L-arginine biosynthesis; L-arginine from L-ornithine and carbamoyl phosphate: step 3/3. In Herpetosiphon aurantiacus (strain ATCC 23779 / DSM 785 / 114-95), this protein is Argininosuccinate lyase.